The chain runs to 200 residues: Small ribosomal subunit protein uS4 (200 aa).

An S4 RNA-binding domain is found at 94-157; that stretch reads SRLDNLVFRA…QTSPQVKDAV (64 aa).

It belongs to the universal ribosomal protein uS4 family. Part of the 30S ribosomal subunit. Contacts protein S5. The interaction surface between S4 and S5 is involved in control of translational fidelity.

One of the primary rRNA binding proteins, it binds directly to 16S rRNA where it nucleates assembly of the body of the 30S subunit. In terms of biological role, with S5 and S12 plays an important role in translational accuracy. The polypeptide is Small ribosomal subunit protein uS4 (Metamycoplasma arthritidis (strain 158L3-1) (Mycoplasma arthritidis)).